The chain runs to 530 residues: MAAKHVLFSTDARQKMLSGVNLLANAVKVTLGPKGRHVVLNKSYGAPTITKDGVSVAKEIELADKFENMGAQMLKQVASKANDEAGDGTTTATVLAQALINEGMKAVAAGMNPMDLKRGIDKAVSAAVEKLHQLAKPCSDTQSITQVGAISANSDHAIGEIIAQAMEKVGRNGVITVEEGQALQNELSVVEGMQFDRGYLSPYFINQPKAGCVELENPYVLLVDKKISHIRELLPILESVAKASRSLLIIAEDVDGDALATLVVNSMRGIIKVAAVKAPGFGEQRKAMLEDIAALTAGRVISEEIGLELEKVTLDDLGSAKKVTINKDNTTIVDGAAEPSALQDRIAQIQHQLEHTTSQYDRDKLQQRIAKLSGGVAVIKIGAATEVEMKEKKDRVDDALHATRAAVEEGIVAGGGVALLKIANELSNLQGDNDDQNVGIRIALRAMEEPLRQIAINAGDEASVIANQVKTGDEHYGYNAATGQFGNMLEMGILDPAKVTRSALQFAASIAGLMITTEAMVSEVDKESAA.

Residues 30-33, Lys51, 87-91, Gly415, 479-481, and Asp495 each bind ATP; these read TLGP, DGTTT, and NAA.

Belongs to the chaperonin (HSP60) family. In terms of assembly, forms a cylinder of 14 subunits composed of two heptameric rings stacked back-to-back. Interacts with the co-chaperonin GroES.

Its subcellular location is the cytoplasm. The enzyme catalyses ATP + H2O + a folded polypeptide = ADP + phosphate + an unfolded polypeptide.. Functionally, together with its co-chaperonin GroES, plays an essential role in assisting protein folding. The GroEL-GroES system forms a nano-cage that allows encapsulation of the non-native substrate proteins and provides a physical environment optimized to promote and accelerate protein folding. This is Chaperonin GroEL 2 from Vibrio cholerae serotype O1 (strain ATCC 39315 / El Tor Inaba N16961).